Reading from the N-terminus, the 739-residue chain is Catalase-peroxidase (739 aa).

The segment at residues 99–227 (WHSAGTYRMG…LAAVQMGLIY (129 aa)) is a cross-link (tryptophyl-tyrosyl-methioninium (Trp-Tyr) (with M-253)). H100 functions as the Proton acceptor in the catalytic mechanism. The segment at residues 227 to 253 (YVNPEGPDGNPDPVASGRDVRETFARM) is a cross-link (tryptophyl-tyrosyl-methioninium (Tyr-Met) (with W-99)). H268 contributes to the heme b binding site.

Belongs to the peroxidase family. Peroxidase/catalase subfamily. Homodimer or homotetramer. It depends on heme b as a cofactor. Formation of the three residue Trp-Tyr-Met cross-link is important for the catalase, but not the peroxidase activity of the enzyme.

It carries out the reaction H2O2 + AH2 = A + 2 H2O. The enzyme catalyses 2 H2O2 = O2 + 2 H2O. Functionally, bifunctional enzyme with both catalase and broad-spectrum peroxidase activity. This Syntrophotalea carbinolica (strain DSM 2380 / NBRC 103641 / GraBd1) (Pelobacter carbinolicus) protein is Catalase-peroxidase.